We begin with the raw amino-acid sequence, 212 residues long: Translation initiation factor IF-3 (212 aa).

A disordered region spans residues 171–212; that stretch reads PKSASKKGHTPPKTQVEASKQANESAETEEEKKRCHPTKPVL. The span at 182–195 shows a compositional bias: polar residues; sequence PKTQVEASKQANES.

The protein belongs to the IF-3 family. As to quaternary structure, monomer.

Its subcellular location is the cytoplasm. Its function is as follows. IF-3 binds to the 30S ribosomal subunit and shifts the equilibrium between 70S ribosomes and their 50S and 30S subunits in favor of the free subunits, thus enhancing the availability of 30S subunits on which protein synthesis initiation begins. This Porphyromonas gingivalis (strain ATCC 33277 / DSM 20709 / CIP 103683 / JCM 12257 / NCTC 11834 / 2561) protein is Translation initiation factor IF-3.